A 185-amino-acid chain; its full sequence is Bcl-2-modifying factor (185 aa).

Residues 1 to 28 are disordered; the sequence is MEPPQCVEELEDDVFQSEDGEPGTQPGG. Positions 8 to 21 are enriched in acidic residues; it reads EELEDDVFQSEDGE. The interval 67–75 is interaction with DLC2; sequence DKATQTLSP. The BH3 signature appears at 134 to 148; it reads IARKLQCIADQFHRL.

Belongs to the Bcl-2 family. In terms of assembly, interacts with MCL1, BCL2, BCL2L1/BCL-Xl, BCL2A1 and BCL2L2/BCL-w. Interacts with the myosin V actin motor complex through its binding to DLC2. In terms of tissue distribution, widely expressed with an abundant expression in pancreas, liver kidney and hematopoietic tissues.

Its function is as follows. May play a role in apoptosis. This chain is Bcl-2-modifying factor (Bmf), found in Mus musculus (Mouse).